The primary structure comprises 432 residues: Glutamyl-tRNA reductase (432 aa).

Substrate is bound by residues 50-53 (TCNR), S110, 115-117 (ETQ), and Q121. The active-site Nucleophile is the C51. 190–195 (GVGEMS) provides a ligand contact to NADP(+).

It belongs to the glutamyl-tRNA reductase family. In terms of assembly, homodimer.

It carries out the reaction (S)-4-amino-5-oxopentanoate + tRNA(Glu) + NADP(+) = L-glutamyl-tRNA(Glu) + NADPH + H(+). It participates in porphyrin-containing compound metabolism; protoporphyrin-IX biosynthesis; 5-aminolevulinate from L-glutamyl-tRNA(Glu): step 1/2. In terms of biological role, catalyzes the NADPH-dependent reduction of glutamyl-tRNA(Glu) to glutamate 1-semialdehyde (GSA). In Sulfurimonas denitrificans (strain ATCC 33889 / DSM 1251) (Thiomicrospira denitrificans (strain ATCC 33889 / DSM 1251)), this protein is Glutamyl-tRNA reductase.